The following is a 336-amino-acid chain: Coproporphyrin III ferrochelatase (336 aa).

The Fe-coproporphyrin III site is built by Ser-52 and Tyr-116. Fe(2+) contacts are provided by His-172 and Glu-255.

The protein belongs to the ferrochelatase family.

The protein localises to the cytoplasm. It catalyses the reaction Fe-coproporphyrin III + 2 H(+) = coproporphyrin III + Fe(2+). The protein operates within porphyrin-containing compound metabolism; protoheme biosynthesis. Its function is as follows. Involved in coproporphyrin-dependent heme b biosynthesis. Catalyzes the insertion of ferrous iron into coproporphyrin III to form Fe-coproporphyrin III. The sequence is that of Coproporphyrin III ferrochelatase from Mycobacterium avium (strain 104).